The sequence spans 216 residues: Probable transaldolase (216 aa).

The active-site Schiff-base intermediate with substrate is the Lys-83.

This sequence belongs to the transaldolase family. Type 3B subfamily.

It is found in the cytoplasm. The catalysed reaction is D-sedoheptulose 7-phosphate + D-glyceraldehyde 3-phosphate = D-erythrose 4-phosphate + beta-D-fructose 6-phosphate. The protein operates within carbohydrate degradation; pentose phosphate pathway; D-glyceraldehyde 3-phosphate and beta-D-fructose 6-phosphate from D-ribose 5-phosphate and D-xylulose 5-phosphate (non-oxidative stage): step 2/3. Its function is as follows. Transaldolase is important for the balance of metabolites in the pentose-phosphate pathway. The chain is Probable transaldolase from Sorangium cellulosum (strain So ce56) (Polyangium cellulosum (strain So ce56)).